Reading from the N-terminus, the 149-residue chain is Secreted RxLR effector protein 3 (149 aa).

Positions 1-23 are cleaved as a signal peptide; the sequence is MRASTILFVLGAAILAVIGVTTA. The RxLR-dEER signature appears at 38–53; it reads RLLRSGSMEQEPDEER.

It belongs to the RxLR effector family.

It localises to the secreted. The protein resides in the host nucleus. Its subcellular location is the host cytoplasm. Its function is as follows. Secreted effector that completely suppresses the host cell death induced by cell death-inducing proteins. This is Secreted RxLR effector protein 3 from Plasmopara viticola (Downy mildew of grapevine).